The sequence spans 271 residues: Ribosomal RNA small subunit methyltransferase J (271 aa).

S-adenosyl-L-methionine contacts are provided by residues 116–117, 132–133, 168–169, and Asp190; these read RD, ER, and SS.

The protein belongs to the methyltransferase superfamily. RsmJ family.

Its subcellular location is the cytoplasm. It carries out the reaction guanosine(1516) in 16S rRNA + S-adenosyl-L-methionine = N(2)-methylguanosine(1516) in 16S rRNA + S-adenosyl-L-homocysteine + H(+). Specifically methylates the guanosine in position 1516 of 16S rRNA. This chain is Ribosomal RNA small subunit methyltransferase J, found in Shewanella piezotolerans (strain WP3 / JCM 13877).